We begin with the raw amino-acid sequence, 451 residues long: UPF0210 protein Asuc_1169 (451 aa).

It belongs to the UPF0210 family. Homodimer.

The sequence is that of UPF0210 protein Asuc_1169 from Actinobacillus succinogenes (strain ATCC 55618 / DSM 22257 / CCUG 43843 / 130Z).